We begin with the raw amino-acid sequence, 283 residues long: Pyridoxal kinase PdxY (283 aa).

Ser8 contacts substrate. ATP-binding residues include Asp110 and Glu147. Asp219 is a substrate binding site.

The protein belongs to the pyridoxine kinase family. PdxY subfamily. In terms of assembly, homodimer. Requires Mg(2+) as cofactor.

The enzyme catalyses pyridoxal + ATP = pyridoxal 5'-phosphate + ADP + H(+). Its pathway is cofactor metabolism; pyridoxal 5'-phosphate salvage; pyridoxal 5'-phosphate from pyridoxal: step 1/1. Pyridoxal kinase involved in the salvage pathway of pyridoxal 5'-phosphate (PLP). Catalyzes the phosphorylation of pyridoxal to PLP. The protein is Pyridoxal kinase PdxY of Leifsonia xyli subsp. xyli (strain CTCB07).